Consider the following 152-residue polypeptide: D-aminoacyl-tRNA deacylase (152 aa).

The short motif at 137–138 is the Gly-cisPro motif, important for rejection of L-amino acids element; the sequence is GP.

Belongs to the DTD family. In terms of assembly, homodimer.

The protein resides in the cytoplasm. It carries out the reaction glycyl-tRNA(Ala) + H2O = tRNA(Ala) + glycine + H(+). It catalyses the reaction a D-aminoacyl-tRNA + H2O = a tRNA + a D-alpha-amino acid + H(+). In terms of biological role, an aminoacyl-tRNA editing enzyme that deacylates mischarged D-aminoacyl-tRNAs. Also deacylates mischarged glycyl-tRNA(Ala), protecting cells against glycine mischarging by AlaRS. Acts via tRNA-based rather than protein-based catalysis; rejects L-amino acids rather than detecting D-amino acids in the active site. By recycling D-aminoacyl-tRNA to D-amino acids and free tRNA molecules, this enzyme counteracts the toxicity associated with the formation of D-aminoacyl-tRNA entities in vivo and helps enforce protein L-homochirality. This chain is D-aminoacyl-tRNA deacylase, found in Geobacter sulfurreducens (strain ATCC 51573 / DSM 12127 / PCA).